The following is a 145-amino-acid chain: Superoxide dismutase [Mn/Fe] (145 aa).

Residues H10 and H64 each coordinate Fe(3+). Residues H10 and H64 each contribute to the Mn(2+) site. The segment at 126–145 is disordered; the sequence is TSTANQDTPISEGKKPILGL.

This sequence belongs to the iron/manganese superoxide dismutase family. The cofactor is Mn(2+). Fe(3+) is required as a cofactor.

The catalysed reaction is 2 superoxide + 2 H(+) = H2O2 + O2. Destroys superoxide anion radicals which are normally produced within the cells and which are toxic to biological systems. Catalyzes the dismutation of superoxide anion radicals into O2 and H2O2 by successive reduction and oxidation of the transition metal ion at the active site. The protein is Superoxide dismutase [Mn/Fe] (sodA) of Streptococcus mitis.